The primary structure comprises 951 residues: Pentatricopeptide repeat-containing protein At4g19220, mitochondrial (951 aa).

The N-terminal 63 residues, 1–63 (MLLVMVRSST…RHFTSSVLSP (63 aa)), are a transit peptide targeting the mitochondrion. PPR repeat units follow at residues 121-151 (DLATSSKLLTFYGRTGELVSSSCLFDELKEK), 152-186 (DVIVWNSMITALNQNGRYIAAVGLFIEMIHKGNEF), 187-221 (DSTTLLLAASALSSLHLSRKCSMLHCLAIETGLVG), 222-252 (DSSLCNALMNLYAKGENLSSAECVFTHMEHR), 253-287 (DIVSWNTIMTKCLANGHPRKSLQYFKSMTGSGQEA), 288-322 (DTVTFSCVISACSSIEELTLGESLHGLVIKSGYSP), 325-355 (HVSVGNSIISMYSKCGDTEAAETVFEELVCR), 356-386 (DVISSNAILNGFAANGMFEEAFGILNQMQSV), 392-426 (DIATVVSITSICGDLSFSREGRAVHGYTVRMEMQS), 428-458 (ALEVINSVIDMYGKCGLTTQAELLFKTTTHR), 459-489 (DLVSWNSMISAFSQNGFTHKAKNLFKEVVSE), 496-530 (SLSTVLAILTSCDSSDSLIFGKSVHCWLQKLGFGD), 531-561 (NMLSANSVINMYIGCRDLTSAFLRLETMSET), 563-597 (DLTSWNSVISGCASSGHHLESLRAFQAMSREGKIR), 599-629 (DLITLLGTISASGNLGLVLQGRCFHGLAIKS), 634-668 (DTQLQNTLITMYGRCKDIESAVKVFGLISDPNLCS), 669-695 (WNCVISALSQNKAGREVFQLFRNLKLE), 697-731 (NEITFVGLLSASTQLGSTSYGMQAHCHLIRRGFQA), 732-762 (NPFVSAALVDMYSSCGMLETGMKVFRNSGVN), 763-793 (SISAWNSVISAHGFHGMGEKAMELFKELSSN), 799-829 (NKSSFISLLSACSHSGFIDEGLSYYKQMEEK), and 835-865 (VTEHRVWIVDMLGRAGKLREAYEFITGIGEP). The type E motif stretch occupies residues 870–945 (VWGALLSACN…LPGYSVIDVR (76 aa)).

The protein belongs to the PPR family. PCMP-E subfamily.

Its subcellular location is the mitochondrion. In Arabidopsis thaliana (Mouse-ear cress), this protein is Pentatricopeptide repeat-containing protein At4g19220, mitochondrial (PCMP-E2).